The following is a 389-amino-acid chain: Chalcone synthase (389 aa).

Catalysis depends on residues Cys-164, His-303, and Asn-336.

The protein belongs to the thiolase-like superfamily. Chalcone/stilbene synthases family. As to quaternary structure, homodimer. As to expression, mainly expressed in flowers, to a lower extent in young leaves, and barely in mature leaves and twigs.

The catalysed reaction is (E)-4-coumaroyl-CoA + 3 malonyl-CoA + 3 H(+) = 2',4,4',6'-tetrahydroxychalcone + 3 CO2 + 4 CoA. It functions in the pathway secondary metabolite biosynthesis; flavonoid biosynthesis. The primary product of this enzyme is 4,2',4',6'-tetrahydroxychalcone (also termed naringenin-chalcone or chalcone) which can under specific conditions spontaneously isomerize into naringenin. In Rhododendron dauricum (Azalea daurica), this protein is Chalcone synthase.